The following is a 282-amino-acid chain: Elongation factor Ts (282 aa).

Residues 80 to 83 (TDFV) are involved in Mg(2+) ion dislocation from EF-Tu.

Belongs to the EF-Ts family.

It localises to the cytoplasm. Functionally, associates with the EF-Tu.GDP complex and induces the exchange of GDP to GTP. It remains bound to the aminoacyl-tRNA.EF-Tu.GTP complex up to the GTP hydrolysis stage on the ribosome. This Chlamydia pneumoniae (Chlamydophila pneumoniae) protein is Elongation factor Ts (tsf).